Consider the following 416-residue polypeptide: Transcription factor PIL1 (416 aa).

Disordered regions lie at residues 1–24, 89–113, and 197–231; these read MEAK…NIKP, VSQS…KLKS, and ESTY…KRST. Residues 8–22 show a composition bias toward low complexity; it reads SSSSEPNMISPSSNI. The stretch at 95 to 124 forms a coiled coil; that stretch reads QQDKETNEQMNNNKKKLKSSKIEFERNVSK. The segment covering 216-229 has biased composition (basic residues); that stretch reads VHARTRKPVTKRKR. In terms of domain architecture, bHLH spans 229 to 278; the sequence is RSTEVHKLYERKRRDEFNKKMRALQDLLPNCYKDDKASLLDEAIKYMRTL.

In terms of assembly, homodimer. Interacts with APRR1/TOC1. Associates to PTAC12/HMR/PAP5 which acts as a transcriptional coactivator. In terms of tissue distribution, mainly expressed in stems, fruits and flowers and, to a lower extent, in leaves, seedlings and roots. Accumulates in etiolated seedlings.

It localises to the nucleus. In terms of biological role, transcription factor. Involved in responses to transient and long-term shade. Required for the light-mediated inhibition of hypocotyl elongation. Necessary for rapid light-induced expression of the photomorphogenesis- and circadian-related gene APRR9. Seems to play a role in multiple PHYB responses, such as flowering transition and petiole elongation. This Arabidopsis thaliana (Mouse-ear cress) protein is Transcription factor PIL1.